Reading from the N-terminus, the 95-residue chain is Aspartyl/glutamyl-tRNA(Asn/Gln) amidotransferase subunit C (95 aa).

Belongs to the GatC family. In terms of assembly, heterotrimer of A, B and C subunits.

It catalyses the reaction L-glutamyl-tRNA(Gln) + L-glutamine + ATP + H2O = L-glutaminyl-tRNA(Gln) + L-glutamate + ADP + phosphate + H(+). The enzyme catalyses L-aspartyl-tRNA(Asn) + L-glutamine + ATP + H2O = L-asparaginyl-tRNA(Asn) + L-glutamate + ADP + phosphate + 2 H(+). In terms of biological role, allows the formation of correctly charged Asn-tRNA(Asn) or Gln-tRNA(Gln) through the transamidation of misacylated Asp-tRNA(Asn) or Glu-tRNA(Gln) in organisms which lack either or both of asparaginyl-tRNA or glutaminyl-tRNA synthetases. The reaction takes place in the presence of glutamine and ATP through an activated phospho-Asp-tRNA(Asn) or phospho-Glu-tRNA(Gln). The sequence is that of Aspartyl/glutamyl-tRNA(Asn/Gln) amidotransferase subunit C from Halorhodospira halophila (strain DSM 244 / SL1) (Ectothiorhodospira halophila (strain DSM 244 / SL1)).